Consider the following 31-residue polypeptide: Cytochrome b6-f complex subunit 6 (31 aa).

A helical membrane pass occupies residues 4–26 (ITSYFGFLLAALTITSALLIGLN).

Belongs to the PetL family. As to quaternary structure, the 4 large subunits of the cytochrome b6-f complex are cytochrome b6, subunit IV (17 kDa polypeptide, PetD), cytochrome f and the Rieske protein, while the 4 small subunits are PetG, PetL, PetM and PetN. The complex functions as a dimer.

It localises to the plastid. The protein resides in the chloroplast thylakoid membrane. Component of the cytochrome b6-f complex, which mediates electron transfer between photosystem II (PSII) and photosystem I (PSI), cyclic electron flow around PSI, and state transitions. PetL is important for photoautotrophic growth as well as for electron transfer efficiency and stability of the cytochrome b6-f complex. The protein is Cytochrome b6-f complex subunit 6 of Amborella trichopoda.